A 185-amino-acid polypeptide reads, in one-letter code: Elongation factor P (185 aa).

This sequence belongs to the elongation factor P family.

It localises to the cytoplasm. It participates in protein biosynthesis; polypeptide chain elongation. Involved in peptide bond synthesis. Stimulates efficient translation and peptide-bond synthesis on native or reconstituted 70S ribosomes in vitro. Probably functions indirectly by altering the affinity of the ribosome for aminoacyl-tRNA, thus increasing their reactivity as acceptors for peptidyl transferase. This is Elongation factor P (efp) from Thermotoga maritima (strain ATCC 43589 / DSM 3109 / JCM 10099 / NBRC 100826 / MSB8).